Here is a 24-residue protein sequence, read N- to C-terminus: Transaldolase (24 aa).

This sequence belongs to the transaldolase family.

It is found in the cytoplasm. The enzyme catalyses D-sedoheptulose 7-phosphate + D-glyceraldehyde 3-phosphate = D-erythrose 4-phosphate + beta-D-fructose 6-phosphate. The protein operates within carbohydrate degradation; pentose phosphate pathway; D-glyceraldehyde 3-phosphate and beta-D-fructose 6-phosphate from D-ribose 5-phosphate and D-xylulose 5-phosphate (non-oxidative stage): step 2/3. In terms of biological role, transaldolase is important for the balance of metabolites in the pentose-phosphate pathway. This chain is Transaldolase, found in Capsicum annuum var. annuum (Red pepper).